The chain runs to 677 residues: DNA ligase (677 aa).

NAD(+) contacts are provided by residues 35-39 (DAVYD), 84-85 (SL), and Glu-115. Residue Lys-117 is the N6-AMP-lysine intermediate of the active site. The NAD(+) site is built by Arg-138, Glu-177, Lys-296, and Lys-320. Zn(2+)-binding residues include Cys-414, Cys-417, Cys-432, and Cys-437. The 79-residue stretch at 599–677 (NGILKLNGKT…ETQLLEILEE (79 aa)) folds into the BRCT domain.

This sequence belongs to the NAD-dependent DNA ligase family. LigA subfamily. Mg(2+) serves as cofactor. Requires Mn(2+) as cofactor.

It carries out the reaction NAD(+) + (deoxyribonucleotide)n-3'-hydroxyl + 5'-phospho-(deoxyribonucleotide)m = (deoxyribonucleotide)n+m + AMP + beta-nicotinamide D-nucleotide.. DNA ligase that catalyzes the formation of phosphodiester linkages between 5'-phosphoryl and 3'-hydroxyl groups in double-stranded DNA using NAD as a coenzyme and as the energy source for the reaction. It is essential for DNA replication and repair of damaged DNA. The polypeptide is DNA ligase (Nostoc sp. (strain PCC 7120 / SAG 25.82 / UTEX 2576)).